Consider the following 117-residue polypeptide: Immunoglobulin kappa variable 1D-17 (117 aa).

An N-terminal signal peptide occupies residues 1–22; that stretch reads MDMRVPAQLLGLLLLWFPGARC. A framework-1 region spans residues 23-45; the sequence is NIQMTQSPSAMSASVGDRVTITC. Residues 23–117 form the Ig-like domain; the sequence is NIQMTQSPSA…YYCLQHNSYP (95 aa). C45 and C110 form a disulfide bridge. Positions 46-56 are complementarity-determining-1; that stretch reads RARQGISNYLA. The segment at 57-71 is framework-2; sequence WFQQKPGKVPKHLIY. Residues 72-78 are complementarity-determining-2; it reads AASSLQS. The segment at 79–110 is framework-3; that stretch reads GVPSRFSGSGSGTEFTLTISSLQPEDFATYYC. Positions 111–117 are complementarity-determining-3; the sequence is LQHNSYP.

As to quaternary structure, immunoglobulins are composed of two identical heavy chains and two identical light chains; disulfide-linked.

Its subcellular location is the secreted. The protein resides in the cell membrane. In terms of biological role, v region of the variable domain of immunoglobulin light chains that participates in the antigen recognition. Immunoglobulins, also known as antibodies, are membrane-bound or secreted glycoproteins produced by B lymphocytes. In the recognition phase of humoral immunity, the membrane-bound immunoglobulins serve as receptors which, upon binding of a specific antigen, trigger the clonal expansion and differentiation of B lymphocytes into immunoglobulins-secreting plasma cells. Secreted immunoglobulins mediate the effector phase of humoral immunity, which results in the elimination of bound antigens. The antigen binding site is formed by the variable domain of one heavy chain, together with that of its associated light chain. Thus, each immunoglobulin has two antigen binding sites with remarkable affinity for a particular antigen. The variable domains are assembled by a process called V-(D)-J rearrangement and can then be subjected to somatic hypermutations which, after exposure to antigen and selection, allow affinity maturation for a particular antigen. This is Immunoglobulin kappa variable 1D-17 from Homo sapiens (Human).